Consider the following 347-residue polypeptide: CCN family member 2 (347 aa).

An N-terminal signal peptide occupies residues 1–24 (MLASVAGPVSLALVLLLCTRPATG). In terms of domain architecture, IGFBP N-terminal spans 25-96 (QDCSAQCQCA…NRKIGVCTAK (72 aa)). 6 disulfides stabilise this stretch: cysteine 27-cysteine 52, cysteine 31-cysteine 54, cysteine 33-cysteine 55, cysteine 41-cysteine 58, cysteine 66-cysteine 80, and cysteine 72-cysteine 93. Residues 99–165 (APCVFGGSVY…GKCCEEWVCD (67 aa)) form the VWFC domain. One can recognise a TSP type-1 domain in the interval 196–241 (NCLVQTTEWSACSKTCGMGISTRVTNDNTFCRLEKQSRLCMVRPCE). Residues 245–347 (EENIKKGKKC…YYRKMYGDMA (103 aa)) form a heparin-binding region. 5 disulfide bridges follow: cysteine 254/cysteine 291, cysteine 271/cysteine 305, cysteine 282/cysteine 321, cysteine 285/cysteine 323, and cysteine 290/cysteine 327. Residues 254–328 (CIRTPKIAKP…KTCACHYNCP (75 aa)) form the CTCK domain.

It belongs to the CCN family. Monomer. Interacts with TSKU.

The protein localises to the secreted. The protein resides in the extracellular space. It localises to the extracellular matrix. Functionally, major connective tissue mitoattractant secreted by vascular endothelial cells. Promotes proliferation and differentiation of chondrocytes. Is involved in the stimulation of osteoblast differentiation and has a critical role in osteogenesis. Mediates heparin- and divalent cation-dependent cell adhesion in many cell types including fibroblasts, myofibroblasts, endothelial and epithelial cells. Enhances fibroblast growth factor-induced DNA synthesis. This chain is CCN family member 2, found in Rattus norvegicus (Rat).